A 505-amino-acid polypeptide reads, in one-letter code: 2,3-bisphosphoglycerate-independent phosphoglycerate mutase (505 aa).

Mn(2+) contacts are provided by Asp13 and Ser63. Ser63 serves as the catalytic Phosphoserine intermediate. Substrate is bound by residues His124, 153–154, Arg183, Arg189, 254–257, and Lys330; these read RD and RADR. Mn(2+)-binding residues include Asp396, His400, Asp437, His438, and His456.

The protein belongs to the BPG-independent phosphoglycerate mutase family. As to quaternary structure, monomer. Mn(2+) is required as a cofactor.

It carries out the reaction (2R)-2-phosphoglycerate = (2R)-3-phosphoglycerate. Its pathway is carbohydrate degradation; glycolysis; pyruvate from D-glyceraldehyde 3-phosphate: step 3/5. In terms of biological role, catalyzes the interconversion of 2-phosphoglycerate and 3-phosphoglycerate. The sequence is that of 2,3-bisphosphoglycerate-independent phosphoglycerate mutase from Ruegeria pomeroyi (strain ATCC 700808 / DSM 15171 / DSS-3) (Silicibacter pomeroyi).